A 126-amino-acid chain; its full sequence is Large ribosomal subunit protein bL12 (126 aa).

It belongs to the bacterial ribosomal protein bL12 family. In terms of assembly, homodimer. Part of the ribosomal stalk of the 50S ribosomal subunit. Forms a multimeric L10(L12)X complex, where L10 forms an elongated spine to which 2 to 4 L12 dimers bind in a sequential fashion. Binds GTP-bound translation factors.

Functionally, forms part of the ribosomal stalk which helps the ribosome interact with GTP-bound translation factors. Is thus essential for accurate translation. This Methylocella silvestris (strain DSM 15510 / CIP 108128 / LMG 27833 / NCIMB 13906 / BL2) protein is Large ribosomal subunit protein bL12.